Here is a 787-residue protein sequence, read N- to C-terminus: MAAGLPPLVVSPDLVKSRPERPAGQAPAQSPDAPEVQAQPSAPARSLPTPESPPPAVALPPVGTPAEPAAGAAPAESGPIAAGATEIRAQQISGTRAVELVAEGNAELRRDGILLSADRLTYSELTDEARAEGNVLVAQGTDRVEGPRANLKIAEQVGEFEAPQYRFSRRSDPAPGEPVREISGSGHADVMHFEGENQYRLENATWSTCQADDPDWYIKARDLELDYDREVGVVRGGSVIFQDVPIFWWPWAEFPLVAQRQSGFLSPTVGVSNKAGVDISVPYYWNLAPNYDATFAPRFMGRRGVQLGGEFRYLTPGYRGESRVEWLPRDAVTGEERALGSVQHQQQITPNLYGSLDLNAVSDDQYFEDLSSRLSVASQVNLLREGRLSYVASDWWSASALVQSYQTLSGEDPYRRLPQLLLNANRQDMAAGTVFGFRGEYVQFEHTDSRKPEGSRFTLYPQLSLPFERPGYYVTPKIGVHHTQYALDRDLSGESDSITRSLPIFTLDSGLNFERDTTLFAREYLQTLEPRIYYVRTPYRNQDDIPVFDTARFDFGFAQIFSENLYAGGDRIADANQVTAAVTSRLIDPGTGAERMRATIGQRYYFDEQRVALPGEPRRGERRADMLAAFSGRVTTSSSIDSAWQYNPREQLTERFNFAVRYQPEFAKALNLGYRYSREVLEDLDLSGQWPLGGGWYGVARVTRSLKENRITETIAGLEYDGGCWVVRSAVHRFATNPDDVTEALFVQLELNGLASVGSSPVNLLKRSVAGYGKINEPVSDRVFGAY.

Positions 1–78 are disordered; the sequence is MAAGLPPLVV…AAGAAPAESG (78 aa). Positions 59–78 are enriched in low complexity; that stretch reads LPPVGTPAEPAAGAAPAESG.

This sequence belongs to the LptD family. In terms of assembly, component of the lipopolysaccharide transport and assembly complex. Interacts with LptE and LptA.

Functionally, together with LptE, is involved in the assembly of lipopolysaccharide (LPS) at the surface of the outer membrane. The polypeptide is LPS-assembly protein LptD (Aromatoleum aromaticum (strain DSM 19018 / LMG 30748 / EbN1) (Azoarcus sp. (strain EbN1))).